A 297-amino-acid chain; its full sequence is Urease accessory protein UreD (297 aa).

Belongs to the UreD family. UreD, UreF and UreG form a complex that acts as a GTP-hydrolysis-dependent molecular chaperone, activating the urease apoprotein by helping to assemble the nickel containing metallocenter of UreC. The UreE protein probably delivers the nickel.

It localises to the cytoplasm. Functionally, required for maturation of urease via the functional incorporation of the urease nickel metallocenter. In Prochlorococcus marinus subsp. pastoris (strain CCMP1986 / NIES-2087 / MED4), this protein is Urease accessory protein UreD.